A 157-amino-acid polypeptide reads, in one-letter code: Crossover junction endodeoxyribonuclease RuvC (157 aa).

Residues Asp7, Glu67, and Asp140 contribute to the active site. Mg(2+) is bound by residues Asp7, Glu67, and Asp140.

It belongs to the RuvC family. Homodimer which binds Holliday junction (HJ) DNA. The HJ becomes 2-fold symmetrical on binding to RuvC with unstacked arms; it has a different conformation from HJ DNA in complex with RuvA. In the full resolvosome a probable DNA-RuvA(4)-RuvB(12)-RuvC(2) complex forms which resolves the HJ. Requires Mg(2+) as cofactor.

Its subcellular location is the cytoplasm. It carries out the reaction Endonucleolytic cleavage at a junction such as a reciprocal single-stranded crossover between two homologous DNA duplexes (Holliday junction).. The RuvA-RuvB-RuvC complex processes Holliday junction (HJ) DNA during genetic recombination and DNA repair. Endonuclease that resolves HJ intermediates. Cleaves cruciform DNA by making single-stranded nicks across the HJ at symmetrical positions within the homologous arms, yielding a 5'-phosphate and a 3'-hydroxyl group; requires a central core of homology in the junction. The consensus cleavage sequence is 5'-(A/T)TT(C/G)-3'. Cleavage occurs on the 3'-side of the TT dinucleotide at the point of strand exchange. HJ branch migration catalyzed by RuvA-RuvB allows RuvC to scan DNA until it finds its consensus sequence, where it cleaves and resolves the cruciform DNA. In Rickettsia rickettsii (strain Iowa), this protein is Crossover junction endodeoxyribonuclease RuvC.